Here is a 1453-residue protein sequence, read N- to C-terminus: Collagen alpha-1(I) chain (1453 aa).

The first 22 residues, 1-22 (MFSFVDLRLLLLLGATALLTHG), serve as a signal peptide directing secretion. A propeptide spans 23–151 (QEDIPEVSCI…PPGLGGNFAS (129 aa)) (N-terminal propeptide). Residues 29–87 (VSCIHNGLRVPNGETWKPDVCLICICHNGTAVCDGVLCKEDLDCPNPQKREGECCPFCP) form the VWFC domain. A glycan (N-linked (GlcNAc...) asparagine) is linked at asparagine 56. The disordered stretch occupies residues 97-1206 (VIGVEGPKGD…KSQDGGRYYR (1110 aa)). 2 stretches are compositionally biased toward pro residues: residues 109–118 (PQGPRGPVGP) and 128–143 (PGLPGPPGPPGPPGPP). A Pyrrolidone carboxylic acid modification is found at glutamine 152. Positions 152–167 (QMSYGYDEKSAGVSVP) are nonhelical region (N-terminal). Residue lysine 160 is modified to Allysine. Serine 161 carries the phosphoserine modification. The segment at 168–1181 (GPMGPSGPRG…PGPPGPPGPP (1014 aa)) is triple-helical region. Residues proline 179, proline 182, proline 185, proline 194, proline 197, proline 200, proline 215, proline 230, proline 236, proline 245, and proline 251 each carry the 4-hydroxyproline modification. The segment covering 187–206 (PQGFQGPPGEPGEPGASGPM) has biased composition (low complexity). The span at 218–232 (NGDDGEAGKPGRPGE) shows a compositional bias: basic and acidic residues. At lysine 254 the chain carries 5-hydroxylysine; alternate. O-linked (Gal...) hydroxylysine; alternate glycosylation occurs at lysine 254. The residue at position 260 (serine 260) is a Phosphoserine. A 4-hydroxyproline mark is found at proline 278, proline 281, proline 287, proline 296, and proline 302. Over residues 307 to 320 (SAGARGNDGAVGAA) the composition is skewed to low complexity. The span at 322–334 (PPGPTGPTGPPGF) shows a compositional bias: pro residues. A 4-hydroxyproline mark is found at proline 323, proline 332, proline 335, proline 362, proline 365, proline 377, proline 383, proline 392, proline 398, proline 401, and proline 416. The segment covering 335 to 361 (PGAAGAKGEAGPQGARGSEGPQGVRGE) has biased composition (low complexity). Residues 368 to 418 (AGAAGPAGNPGADGQPGAKGANGAPGIAGAPGFPGARGPSGPQGPSGAPGP) show a composition bias toward low complexity. At lysine 419 the chain carries 5-hydroxylysine. 8 positions are modified to 4-hydroxyproline: proline 425, proline 428, proline 440, proline 449, proline 464, proline 470, proline 479, and proline 485. Residues 474-483 (GERGGPGSRG) show a composition bias toward gly residues. Lysine 494 carries the post-translational modification 5-hydroxylysine. Proline 503, proline 512, proline 518, proline 524, proline 533, proline 536, proline 545, proline 554, proline 560, proline 572, proline 581, proline 590, proline 593, proline 611, proline 629, proline 635, proline 641, proline 647, proline 653, proline 659, proline 671, proline 680, proline 692, proline 704, proline 707, proline 713, proline 719, and proline 728 each carry 4-hydroxyproline. Low complexity predominate over residues 527-566 (KGLTGSPGSPGPDGKTGPPGPAGQDGRPGPAGPPGARGQA). Low complexity predominate over residues 623–650 (QGPAGSPGFQGLPGPAGPPGEAGKPGEQ). Composition is skewed to low complexity over residues 685–695 (PRGNNGAPGND) and 703–716 (APGAPGSQGAPGLQ). The short motif at 734 to 736 (RGD) is the Cell attachment site element. Lysine 740 carries the post-translational modification 5-hydroxylysine. 3 positions are modified to 4-hydroxyproline: proline 746, proline 761, and proline 767. Over residues 773-787 (TGPSGPAGPTGARGA) the composition is skewed to low complexity. A Phosphoserine modification is found at serine 776. 4-hydroxyproline occurs at positions 788, 794, 797, 806, 812, 830, 839, and 848. The span at 800-815 (AGFAGPPGADGQPGAK) shows a compositional bias: low complexity. The segment covering 829-841 (PPGPAGPAGPPGP) has biased composition (pro residues). The segment covering 842–872 (IGNVGAPGPKGSRGAAGPPGATGFPGAAGRV) has biased composition (low complexity). 5-hydroxylysine is present on lysine 851. 4-hydroxyproline is present on residues proline 860 and proline 866. Residue proline 874 is modified to 3-hydroxyproline. Proline 875, proline 884, proline 887, proline 908, proline 917, proline 926, proline 935, proline 953, proline 962, proline 965, proline 971, proline 986, proline 992, proline 998, proline 1007, and proline 1013 each carry 4-hydroxyproline. The segment covering 901–910 (ETGPAGRPGE) has biased composition (low complexity). The segment covering 920–935 (AGEKGSPGADGPAGSP) has biased composition (low complexity). The segment covering 985-995 (PPGPMGPPGLA) has biased composition (pro residues). Residues 997-1012 (PPGESGREGSPGAEGS) show a composition bias toward low complexity. Position 1022 is a 5-hydroxylysine (lysine 1022). Residues 1031–1046 (AGPPGAPGAPGAPGPV) are compositionally biased toward pro residues. Residues proline 1034, proline 1037, and proline 1040 each carry the 4-hydroxyproline modification. The span at 1067–1081 (IGPAGARGPAGPQGP) shows a compositional bias: low complexity. A Cell attachment site motif is present at residues 1082 to 1084 (RGD). Basic and acidic residues predominate over residues 1082–1096 (RGDKGETGEQGDRGI). Residue lysine 1085 is modified to 5-hydroxylysine. Lysine 1097 is modified (5-hydroxylysine; alternate). A glycan (O-linked (Gal...) hydroxylysine; alternate) is linked at lysine 1097. Residues 1102-1148 (FSGLQGPPGSPGSPGEQGPSGASGPAGPRGPPGSAGSPGKDGLNGLP) are compositionally biased toward low complexity. A 4-hydroxyproline mark is found at proline 1109, proline 1112, proline 1115, proline 1133, and proline 1148. Proline 1153 is subject to 3-hydroxyproline. A 4-hydroxyproline modification is found at proline 1154. Over residues 1166-1181 (AGPPGPPGPPGPPGPP) the composition is skewed to pro residues. Proline 1168 carries the post-translational modification 3-hydroxyproline. Proline 1169 bears the 4-hydroxyproline mark. A 3-hydroxyproline modification is found at proline 1171. A 4-hydroxyproline modification is found at proline 1172. Proline 1174 is modified (3-hydroxyproline). 4-hydroxyproline is present on residues proline 1175, proline 1178, and proline 1181. The interval 1176-1186 (GPPGPPSGGYD) is major antigenic determinant (of neutral salt-extracted rat skin collagen). The interval 1182–1207 (SGGYDFSFLPQPPQEKSQDGGRYYRA) is nonhelical region (C-terminal). An Allysine modification is found at lysine 1197. A compositionally biased stretch (basic and acidic residues) spans 1197 to 1206 (KSQDGGRYYR). Residues 1208–1453 (DDANVVRDRD…GMDIGPACFV (246 aa)) constitute a propeptide, C-terminal propeptide. One can recognise a Fibrillar collagen NC1 domain in the interval 1218–1453 (LEVDTTLKSL…GMDIGPACFV (236 aa)). 3 disulfide bridges follow: cysteine 1248/cysteine 1280, cysteine 1288/cysteine 1451, and cysteine 1359/cysteine 1404. Ca(2+) is bound by residues aspartate 1266, asparagine 1268, glutamine 1269, cysteine 1271, and aspartate 1274. Residue asparagine 1354 is glycosylated (N-linked (GlcNAc...) asparagine).

It belongs to the fibrillar collagen family. Trimers of one alpha 2(I) and two alpha 1(I) chains. Interacts with MRC2. Interacts with TRAM2. Interacts with MFAP4 in a Ca (2+)-dependent manner. Contains mostly 4-hydroxyproline. Proline residues at the third position of the tripeptide repeating unit (G-X-Y) are hydroxylated in some or all of the chains. Post-translationally, contains 3-hydroxyproline at a few sites. This modification occurs on the first proline residue in the sequence motif Gly-Pro-Hyp, where Hyp is 4-hydroxyproline. In terms of processing, lysine residues at the third position of the tripeptide repeating unit (G-X-Y) are 5-hydroxylated in some or all of the chains. O-glycosylated on hydroxylated lysine residues. The O-linked glycan consists of a Glc-Gal disaccharide. In terms of tissue distribution, forms the fibrils of tendon, ligaments and bones. In bones the fibrils are mineralized with calcium hydroxyapatite.

The protein resides in the secreted. It localises to the extracellular space. Its subcellular location is the extracellular matrix. Its function is as follows. Type I collagen is a member of group I collagen (fibrillar forming collagen). This Rattus norvegicus (Rat) protein is Collagen alpha-1(I) chain (Col1a1).